The following is a 123-amino-acid chain: Small ribosomal subunit protein uS12 (123 aa).

The residue at position 90 (Asp90) is a 3-methylthioaspartic acid.

Belongs to the universal ribosomal protein uS12 family. In terms of assembly, part of the 30S ribosomal subunit. Contacts proteins S8 and S17. May interact with IF1 in the 30S initiation complex.

In terms of biological role, with S4 and S5 plays an important role in translational accuracy. Functionally, interacts with and stabilizes bases of the 16S rRNA that are involved in tRNA selection in the A site and with the mRNA backbone. Located at the interface of the 30S and 50S subunits, it traverses the body of the 30S subunit contacting proteins on the other side and probably holding the rRNA structure together. The combined cluster of proteins S8, S12 and S17 appears to hold together the shoulder and platform of the 30S subunit. The chain is Small ribosomal subunit protein uS12 from Ehrlichia ruminantium (strain Gardel).